The chain runs to 361 residues: uncharacterized protein (361 aa).

33-40 (GPINSGKT) contributes to the ATP binding site.

The protein belongs to the archaeal ATPase family.

This is an uncharacterized protein from Methanocaldococcus jannaschii (strain ATCC 43067 / DSM 2661 / JAL-1 / JCM 10045 / NBRC 100440) (Methanococcus jannaschii).